The sequence spans 192 residues: Peptidyl-tRNA hydrolase (192 aa).

Tyr-17 provides a ligand contact to tRNA. The active-site Proton acceptor is the His-22. 3 residues coordinate tRNA: Tyr-68, Asn-70, and Asn-116.

This sequence belongs to the PTH family. As to quaternary structure, monomer.

Its subcellular location is the cytoplasm. The catalysed reaction is an N-acyl-L-alpha-aminoacyl-tRNA + H2O = an N-acyl-L-amino acid + a tRNA + H(+). Its function is as follows. Hydrolyzes ribosome-free peptidyl-tRNAs (with 1 or more amino acids incorporated), which drop off the ribosome during protein synthesis, or as a result of ribosome stalling. In terms of biological role, catalyzes the release of premature peptidyl moieties from peptidyl-tRNA molecules trapped in stalled 50S ribosomal subunits, and thus maintains levels of free tRNAs and 50S ribosomes. This chain is Peptidyl-tRNA hydrolase, found in Mycolicibacterium gilvum (strain PYR-GCK) (Mycobacterium gilvum (strain PYR-GCK)).